Consider the following 610-residue polypeptide: Elongation factor 4 (610 aa).

The region spanning 11–193 is the tr-type G domain; sequence EKIRNFSIIA…QIVEKVPAPT (183 aa). GTP contacts are provided by residues 23-28 and 140-143; these read DHGKST and NKID.

The protein belongs to the TRAFAC class translation factor GTPase superfamily. Classic translation factor GTPase family. LepA subfamily.

The protein localises to the cell membrane. It carries out the reaction GTP + H2O = GDP + phosphate + H(+). Its function is as follows. Required for accurate and efficient protein synthesis under certain stress conditions. May act as a fidelity factor of the translation reaction, by catalyzing a one-codon backward translocation of tRNAs on improperly translocated ribosomes. Back-translocation proceeds from a post-translocation (POST) complex to a pre-translocation (PRE) complex, thus giving elongation factor G a second chance to translocate the tRNAs correctly. Binds to ribosomes in a GTP-dependent manner. This Streptococcus agalactiae serotype Ia (strain ATCC 27591 / A909 / CDC SS700) protein is Elongation factor 4.